A 478-amino-acid chain; its full sequence is Transposon Ty1-H Gag polyprotein (478 aa).

Composition is skewed to polar residues over residues 1 to 10 (MESQQLSNYP), 48 to 60 (TKAN…TPAS), and 127 to 152 (QSQF…GNTF). Disordered stretches follow at residues 1–84 (MESQ…QNGP), 126–174 (PQSQ…PPPM), and 390–478 (GSRN…PETY). The span at 153–165 (TDSSSADSDMTST) shows a compositional bias: low complexity. Positions 337–439 (NNGIHINNKV…NSKSKTARAH (103 aa)) are RNA-binding. Over residues 440–456 (NVSTSNNSPSTDNDSIS) the composition is skewed to low complexity. Residues 457-466 (KSTTEPIQLN) are compositionally biased toward polar residues. The segment covering 467 to 478 (NKHDLHLRPETY) has biased composition (basic and acidic residues).

In terms of assembly, homotrimer.

The protein localises to the cytoplasm. Its function is as follows. Capsid protein (CA) is the structural component of the virus-like particle (VLP), forming the shell that encapsulates the retrotransposons dimeric RNA genome. The particles are assembled from trimer-clustered units and there are holes in the capsid shells that allow for the diffusion of macromolecules. CA also has nucleocapsid-like chaperone activity, promoting primer tRNA(i)-Met annealing to the multipartite primer-binding site (PBS), dimerization of Ty1 RNA and initiation of reverse transcription. This chain is Transposon Ty1-H Gag polyprotein (TY1A-H), found in Saccharomyces cerevisiae (strain ATCC 204508 / S288c) (Baker's yeast).